A 208-amino-acid chain; its full sequence is Protein-L-isoaspartate O-methyltransferase (208 aa).

The active site involves Ser-59.

This sequence belongs to the methyltransferase superfamily. L-isoaspartyl/D-aspartyl protein methyltransferase family.

It is found in the cytoplasm. The enzyme catalyses [protein]-L-isoaspartate + S-adenosyl-L-methionine = [protein]-L-isoaspartate alpha-methyl ester + S-adenosyl-L-homocysteine. Functionally, catalyzes the methyl esterification of L-isoaspartyl residues in peptides and proteins that result from spontaneous decomposition of normal L-aspartyl and L-asparaginyl residues. It plays a role in the repair and/or degradation of damaged proteins. This chain is Protein-L-isoaspartate O-methyltransferase, found in Salmonella arizonae (strain ATCC BAA-731 / CDC346-86 / RSK2980).